We begin with the raw amino-acid sequence, 2282 residues long: Ectopic P granules protein 5 homolog (2282 aa).

It belongs to the EPG5 family.

Its function is as follows. Involved in autophagy. This Aedes aegypti (Yellowfever mosquito) protein is Ectopic P granules protein 5 homolog.